Here is a 336-residue protein sequence, read N- to C-terminus: UDP-N-acetylenolpyruvoylglucosamine reductase (336 aa).

The region spanning 17-188 (LRSLAERFVE…WDVTFRLPKK (172 aa)) is the FAD-binding PCMH-type domain. Residue arginine 164 is part of the active site. Serine 237 acts as the Proton donor in catalysis. Residue glutamate 332 is part of the active site.

The protein belongs to the MurB family. Requires FAD as cofactor.

Its subcellular location is the cytoplasm. It carries out the reaction UDP-N-acetyl-alpha-D-muramate + NADP(+) = UDP-N-acetyl-3-O-(1-carboxyvinyl)-alpha-D-glucosamine + NADPH + H(+). Its pathway is cell wall biogenesis; peptidoglycan biosynthesis. In terms of biological role, cell wall formation. In Bdellovibrio bacteriovorus (strain ATCC 15356 / DSM 50701 / NCIMB 9529 / HD100), this protein is UDP-N-acetylenolpyruvoylglucosamine reductase.